We begin with the raw amino-acid sequence, 142 residues long: MKTLSAKPAEVQHDWFVVDATGKTLGRLATEIARRLRGKHKTSYTPHVDTGDYIIVINAEQVQVTGNKALDKKYYRHTEFPGGLKETNFEKLVAHKPEEIFERAVKGMLPKGPLGYAMIKKMKVYAGSEHPHAAQQPQVLDI.

It belongs to the universal ribosomal protein uL13 family. As to quaternary structure, part of the 50S ribosomal subunit.

Functionally, this protein is one of the early assembly proteins of the 50S ribosomal subunit, although it is not seen to bind rRNA by itself. It is important during the early stages of 50S assembly. This is Large ribosomal subunit protein uL13 from Acinetobacter baumannii (strain AB0057).